We begin with the raw amino-acid sequence, 80 residues long: Trefoil factor 3 (80 aa).

The signal sequence occupies residues 1 to 21 (MAARALCMLGLVLALLSSSSA). The P-type domain occupies 30 to 73 (NQCAVPAKDRVDCGYPHVTPKECNNRGCCFDSRIPGVPWCFKPL). 3 cysteine pairs are disulfide-bonded: Cys-32–Cys-58, Cys-42–Cys-57, and Cys-52–Cys-69.

Monomer. Homodimer; disulfide-linked. As to expression, expressed in goblet cells of the intestines and colon (at protein level). Expressed by goblet cells of small and large intestinal epithelia and also by the uterus. Also expressed in the hypothalamus where it is detected in paraventricular, periventricular and supraoptic nuclei (at protein level).

Its subcellular location is the secreted. The protein resides in the extracellular space. It is found in the extracellular matrix. The protein localises to the cytoplasm. Involved in the maintenance and repair of the intestinal mucosa. Promotes the mobility of epithelial cells in healing processes (motogen). The polypeptide is Trefoil factor 3 (TFF3) (Homo sapiens (Human)).